Consider the following 527-residue polypeptide: EGF domain-specific O-linked N-acetylglucosamine transferase (527 aa).

A signal peptide spans 1-19 (MLMLLVFGVLLHEVPLSGQ). The Required for optimal activity motif lies at 295–297 (DYD). N-linked (GlcNAc...) asparagine glycosylation occurs at Asn354. The Prevents secretion from ER motif lies at 524-527 (HDEL).

Belongs to the glycosyltransferase 61 family. Widely expressed. Expressed in brain, heart, kidney, lung, skeletal muscles and thymus. Highest expression is observed in lung and the lowest in skeletal muscles.

The protein resides in the endoplasmic reticulum lumen. It carries out the reaction L-seryl-[protein] + UDP-N-acetyl-alpha-D-glucosamine = 3-O-(N-acetyl-beta-D-glucosaminyl)-L-seryl-[protein] + UDP + H(+). The enzyme catalyses L-threonyl-[protein] + UDP-N-acetyl-alpha-D-glucosamine = 3-O-(N-acetyl-beta-D-glucosaminyl)-L-threonyl-[protein] + UDP + H(+). In terms of biological role, catalyzes the transfer of a single N-acetylglucosamine from UDP-GlcNAc to a serine or threonine residue in extracellular proteins resulting in their modification with a beta-linked N-acetylglucosamine (O-GlcNAc). Specifically glycosylates the Thr residue located between the fifth and sixth conserved cysteines of folded EGF-like domains. In Mus musculus (Mouse), this protein is EGF domain-specific O-linked N-acetylglucosamine transferase (Eogt).